Here is a 236-residue protein sequence, read N- to C-terminus: Chorionic somatomammotropin hormone 1 (236 aa).

The first 36 residues, 1–36 (MAPASSHRGHQWICDLVRGSCLLLLLVVSNLLLCQG), serve as a signal peptide directing secretion. An N-linked (GlcNAc...) asparagine glycan is attached at Asn89. 2 disulfide bridges follow: Cys98/Cys214 and Cys231/Cys236.

It belongs to the somatotropin/prolactin family.

The protein localises to the secreted. The polypeptide is Chorionic somatomammotropin hormone 1 (CSH1) (Bos taurus (Bovine)).